A 462-amino-acid chain; its full sequence is Argininosuccinate lyase (462 aa).

It belongs to the lyase 1 family. Argininosuccinate lyase subfamily.

The protein localises to the cytoplasm. It catalyses the reaction 2-(N(omega)-L-arginino)succinate = fumarate + L-arginine. It functions in the pathway amino-acid biosynthesis; L-arginine biosynthesis; L-arginine from L-ornithine and carbamoyl phosphate: step 3/3. This Bacillus mycoides (strain KBAB4) (Bacillus weihenstephanensis) protein is Argininosuccinate lyase.